The chain runs to 151 residues: Acidic phospholipase A2 5 (151 aa).

The N-terminal stretch at 1 to 27 (MYPAHLLVLLAVCVSLLGAASIPARPL) is a signal peptide. 7 cysteine pairs are disulfide-bonded: Cys-38-Cys-104, Cys-54-Cys-151, Cys-56-Cys-72, Cys-71-Cys-132, Cys-78-Cys-125, Cys-88-Cys-118, and Cys-111-Cys-123. Ca(2+) is bound by residues Tyr-55, Gly-57, and Gly-59. His-75 is an active-site residue. Asp-76 contacts Ca(2+). Residue Asp-126 is part of the active site.

It belongs to the phospholipase A2 family. Group I subfamily. D49 sub-subfamily. It depends on Ca(2+) as a cofactor. As to expression, expressed by the venom gland.

It localises to the secreted. It carries out the reaction a 1,2-diacyl-sn-glycero-3-phosphocholine + H2O = a 1-acyl-sn-glycero-3-phosphocholine + a fatty acid + H(+). Its function is as follows. PLA2 catalyzes the calcium-dependent hydrolysis of the 2-acyl groups in 3-sn-phosphoglycerides. This chain is Acidic phospholipase A2 5, found in Tropidechis carinatus (Australian rough-scaled snake).